The following is a 139-amino-acid chain: Acidic phospholipase A2 4 (139 aa).

Positions 1 to 16 are cleaved as a signal peptide; the sequence is MRTLWIVAVWLVGVEG. Intrachain disulfides connect C42–C131, C44–C60, C59–C111, C65–C139, C66–C104, C73–C97, and C91–C102. Y43, G45, and G47 together coordinate Ca(2+). Residue H63 is part of the active site. D64 is a Ca(2+) binding site. D105 is a catalytic residue.

The protein belongs to the phospholipase A2 family. Group II subfamily. D49 sub-subfamily. Ca(2+) is required as a cofactor. In terms of tissue distribution, expressed by the venom gland.

It is found in the secreted. It catalyses the reaction a 1,2-diacyl-sn-glycero-3-phosphocholine + H2O = a 1-acyl-sn-glycero-3-phosphocholine + a fatty acid + H(+). In terms of biological role, PLA2 catalyzes the calcium-dependent hydrolysis of the 2-acyl groups in 3-sn-phosphoglycerides. This chain is Acidic phospholipase A2 4, found in Echis carinatus sochureki (Saw-scaled viper).